The chain runs to 513 residues: ATP synthase subunit alpha 1 (513 aa).

169–176 is an ATP binding site; that stretch reads GDRQTGKT.

Belongs to the ATPase alpha/beta chains family. As to quaternary structure, F-type ATPases have 2 components, CF(1) - the catalytic core - and CF(0) - the membrane proton channel. CF(1) has five subunits: alpha(3), beta(3), gamma(1), delta(1), epsilon(1). CF(0) has three main subunits: a(1), b(2) and c(9-12). The alpha and beta chains form an alternating ring which encloses part of the gamma chain. CF(1) is attached to CF(0) by a central stalk formed by the gamma and epsilon chains, while a peripheral stalk is formed by the delta and b chains.

It localises to the cell inner membrane. It catalyses the reaction ATP + H2O + 4 H(+)(in) = ADP + phosphate + 5 H(+)(out). Its function is as follows. Produces ATP from ADP in the presence of a proton gradient across the membrane. The alpha chain is a regulatory subunit. In Nitrosospira multiformis (strain ATCC 25196 / NCIMB 11849 / C 71), this protein is ATP synthase subunit alpha 1.